We begin with the raw amino-acid sequence, 78 residues long: Delta-conotoxin-like CVIE (78 aa).

The first 22 residues, 1–22 (MKLTCMMIVAVLFLTAWTFVTA), serve as a signal peptide directing secretion. Positions 23 to 49 (DDSRNGLKNLFPKARHEMKNPEASKLN) are excised as a propeptide. 3 disulfide bridges follow: Cys54/Cys69, Cys61/Cys73, and Cys68/Cys77. At Pro65 the chain carries 4-hydroxyproline.

This sequence belongs to the conotoxin O1 superfamily. As to expression, expressed by the venom duct.

It is found in the secreted. Delta-conotoxins bind to site 6 of voltage-gated sodium channels (Nav) and inhibit the inactivation process. In Conus catus (Cat cone), this protein is Delta-conotoxin-like CVIE.